Consider the following 133-residue polypeptide: Small ribosomal subunit protein uS8 (133 aa).

The disordered stretch occupies residues 1–29 (MANHDPISDMLTRIRNASEKRHETTRIPA). Positions 16–25 (NASEKRHETT) are enriched in basic and acidic residues.

It belongs to the universal ribosomal protein uS8 family. Part of the 30S ribosomal subunit. Contacts proteins S5 and S12.

Functionally, one of the primary rRNA binding proteins, it binds directly to 16S rRNA central domain where it helps coordinate assembly of the platform of the 30S subunit. This Prochlorococcus marinus (strain MIT 9211) protein is Small ribosomal subunit protein uS8.